The primary structure comprises 88 residues: Large ribosomal subunit protein bL27 (88 aa).

Positions 1–21 are disordered; that stretch reads MAHKKGQGSTQNNRDSAGRRL.

Belongs to the bacterial ribosomal protein bL27 family.

The sequence is that of Large ribosomal subunit protein bL27 from Helicobacter acinonychis (strain Sheeba).